The sequence spans 443 residues: MKFHLISLGCAKNLVDSEVVLGCLRDAGWEMTDEQDADLLLVNTCGFIQPAVEEAVEEILALVDIKADFPEKKIVVLGCLVQRYKEQLLESLPEVDLFVGTEGVANIAEYVGKLIAGEEQDKVIMPTEFLMTAKVPRQQSTPFFRAWVKITEGCDNRCSYCMIPSIRGPLRSRSVADVLEEVQAMVASGVQEISLIAQDLTAYGDDLGDDVNLLVLLKELLAKTSVPWIRLLYLYPSELLDELLQLMAANPRIVKYLDIPIQHVNDRVLHLMNRPYGRADLEEFVDKARAHMPDIALRTTFLVGFPGETEEEYAEIGEFLRVRKLDHVGVFPYSNEEGAPSEHFPDQVDDEIKESRCARLLELQQELSTEIQKKYVGTVQKVLVEGVSEETDLLLEGRTQYQAADVDGRVYINEGQVVAGEIVDILITDSQQYDLVGGVVSVE.

An MTTase N-terminal domain is found at 1-116 (MKFHLISLGC…IAEYVGKLIA (116 aa)). [4Fe-4S] cluster-binding residues include cysteine 10, cysteine 45, cysteine 79, cysteine 154, cysteine 158, and cysteine 161. The Radical SAM core domain occupies 140-370 (STPFFRAWVK…LELQQELSTE (231 aa)). The TRAM domain occupies 373–441 (KKYVGTVQKV…QYDLVGGVVS (69 aa)).

This sequence belongs to the methylthiotransferase family. RimO subfamily. Requires [4Fe-4S] cluster as cofactor.

It localises to the cytoplasm. It catalyses the reaction L-aspartate(89)-[ribosomal protein uS12]-hydrogen + (sulfur carrier)-SH + AH2 + 2 S-adenosyl-L-methionine = 3-methylsulfanyl-L-aspartate(89)-[ribosomal protein uS12]-hydrogen + (sulfur carrier)-H + 5'-deoxyadenosine + L-methionine + A + S-adenosyl-L-homocysteine + 2 H(+). In terms of biological role, catalyzes the methylthiolation of an aspartic acid residue of ribosomal protein uS12. This is Ribosomal protein uS12 methylthiotransferase RimO from Desulfotalea psychrophila (strain LSv54 / DSM 12343).